We begin with the raw amino-acid sequence, 466 residues long: Ankyrin repeat and SOCS box protein 18 (466 aa).

ANK repeat units lie at residues 119–148 (ELTT…DPDA), 151–180 (GGRG…DPDL), 184–213 (EGLA…SVQR), 218–247 (GRDT…HVDA), 251–288 (RGET…EADA), and 292–321 (DERS…DAGA). Residues 405 to 463 (QMHKPFYQSLFALALTPRCLQHLCRCALRRLFGKRCFDLIPLLPLPKPLQNYLLLEPQG) form the SOCS box domain.

This sequence belongs to the ankyrin SOCS box (ASB) family.

It participates in protein modification; protein ubiquitination. Its function is as follows. May be a substrate-recognition component of a SCF-like ECS (Elongin-Cullin-SOCS-box protein) E3 ubiquitin-protein ligase complex which mediates the ubiquitination and subsequent proteasomal degradation of target proteins. The polypeptide is Ankyrin repeat and SOCS box protein 18 (ASB18) (Homo sapiens (Human)).